Here is a 348-residue protein sequence, read N- to C-terminus: Holliday junction branch migration complex subunit RuvB (348 aa).

Residues 1-183 (MTEASRIVAP…FGIPVRLNFY (183 aa)) form a large ATPase domain (RuvB-L) region. ATP contacts are provided by residues Leu22, Arg23, Gly64, Lys67, Thr68, Thr69, 130 to 132 (EDF), Arg173, Tyr183, and Arg220. Residue Thr68 participates in Mg(2+) binding. Residues 184-254 (TEDELEKIVS…VADHALGALE (71 aa)) are small ATPAse domain (RuvB-S). A head domain (RuvB-H) region spans residues 257–348 (AAGLDAMDRR…SGLFGQDEDR (92 aa)). DNA contacts are provided by Arg293, Arg312, and Arg317. Positions 329–348 (LTEPSRDPAQSGLFGQDEDR) are disordered.

Belongs to the RuvB family. In terms of assembly, homohexamer. Forms an RuvA(8)-RuvB(12)-Holliday junction (HJ) complex. HJ DNA is sandwiched between 2 RuvA tetramers; dsDNA enters through RuvA and exits via RuvB. An RuvB hexamer assembles on each DNA strand where it exits the tetramer. Each RuvB hexamer is contacted by two RuvA subunits (via domain III) on 2 adjacent RuvB subunits; this complex drives branch migration. In the full resolvosome a probable DNA-RuvA(4)-RuvB(12)-RuvC(2) complex forms which resolves the HJ.

It localises to the cytoplasm. It carries out the reaction ATP + H2O = ADP + phosphate + H(+). Functionally, the RuvA-RuvB-RuvC complex processes Holliday junction (HJ) DNA during genetic recombination and DNA repair, while the RuvA-RuvB complex plays an important role in the rescue of blocked DNA replication forks via replication fork reversal (RFR). RuvA specifically binds to HJ cruciform DNA, conferring on it an open structure. The RuvB hexamer acts as an ATP-dependent pump, pulling dsDNA into and through the RuvAB complex. RuvB forms 2 homohexamers on either side of HJ DNA bound by 1 or 2 RuvA tetramers; 4 subunits per hexamer contact DNA at a time. Coordinated motions by a converter formed by DNA-disengaged RuvB subunits stimulates ATP hydrolysis and nucleotide exchange. Immobilization of the converter enables RuvB to convert the ATP-contained energy into a lever motion, pulling 2 nucleotides of DNA out of the RuvA tetramer per ATP hydrolyzed, thus driving DNA branch migration. The RuvB motors rotate together with the DNA substrate, which together with the progressing nucleotide cycle form the mechanistic basis for DNA recombination by continuous HJ branch migration. Branch migration allows RuvC to scan DNA until it finds its consensus sequence, where it cleaves and resolves cruciform DNA. The protein is Holliday junction branch migration complex subunit RuvB of Nitrobacter winogradskyi (strain ATCC 25391 / DSM 10237 / CIP 104748 / NCIMB 11846 / Nb-255).